Reading from the N-terminus, the 502-residue chain is TGF-beta-activated kinase 1 and MAP3K7-binding protein 1 (502 aa).

Positions 1-21 are disordered; that stretch reads MAAQRRSLLQSEQQPSWTDDL. Ser-7 carries the phosphoserine modification. Polar residues predominate over residues 7 to 17; the sequence is SLLQSEQQPSW. A PPM-type phosphatase domain is found at 28 to 365; it reads GVGSASNRSY…EDMTLLVRNF (338 aa). A glycan (O-linked (GlcNAc) serine) is linked at Ser-393. Polar residues predominate over residues 414–437; that stretch reads QMVNGSHSASTLDEATPTLTNQSP. Residues 414 to 476 are disordered; that stretch reads QMVNGSHSAS…SLPPGEDGRV (63 aa). Residue Ser-421 is modified to Phosphoserine. At Thr-429 the chain carries Phosphothreonine. Phosphoserine is present on Ser-436. Residues 438-455 show a composition bias toward low complexity; that stretch reads TLTLQSTNTHTQSSSSSS. Position 440 is a phosphothreonine (Thr-440).

In terms of assembly, interacts with XIAP and BIRC7. Interacts with TRAF6 and MAP3K7; during IL-1 signaling. Identified in the TRIKA2 complex composed of MAP3K7, TAB1 and TAB2. Interacts with TRAF6 and MAPK14; these interactions allow MAPK14 autophosphorylation. Interacts with STING1; interaction takes place following cGAMP activation and promotes TAB1 recruitment to the endoplasmic reticulum, triggering MAP3K7/TAK1 activation and STING1 phosphorylation. Post-translationally, phosphorylated at all three sites Ser-421, Thr-429 and Ser-436 by MAPK14 when cells were exposed to cellular stresses, or stimulated with TNF-alpha, IL1 or LPS. These phosphorylations inhibit TAK1 activation by a feedback control mechanism. Dephosphorylated by DUSP14 at Ser-436, leading to TAB1-MAP3K7/TAK1 complex inactivation in T-cells. In terms of processing, ubiquitinated by MAP3K1 with 'Lys-63'-linked polyubiquitin; leading to activation of TAK1 and of JNK and p38 MAP kinases following EGF and TGF-beta stimulation. Ubiquitinated by ITCH with 'Lys-48'-linked polyubiquitin; leading to proteasomal degradation. Ubiquitinated by RNF114 during maternal-to-zygotic transition; leading to degradation. O-GlcNAcylated at Ser-393 is required for full MAP3K7/TAK1 activation upon stimulation with IL-1 or osmotic stress.

It is found in the cytoplasm. The protein resides in the cytosol. It localises to the endoplasmic reticulum membrane. In terms of biological role, key adapter protein that plays an essential role in JNK and NF-kappa-B activation and proinflammatory cytokines production in response to stimulation with TLRs and cytokines. Mechanistically, associates with the catalytic domain of MAP3K7/TAK1 to trigger MAP3K7/TAK1 autophosphorylation leading to its full activation. Similarly, associates with MAPK14 and triggers its autophosphorylation and subsequent activation. In turn, MAPK14 phosphorylates TAB1 and inhibits MAP3K7/TAK1 activation in a feedback control mechanism. Also plays a role in recruiting MAPK14 to the TAK1 complex for the phosphorylation of the TAB2 and TAB3 regulatory subunits. This Mus musculus (Mouse) protein is TGF-beta-activated kinase 1 and MAP3K7-binding protein 1 (Tab1).